Here is a 183-residue protein sequence, read N- to C-terminus: Threonylcarbamoyl-AMP synthase (183 aa).

Positions 1 to 183 (MELAQIVERL…IFSRQIFRRG (183 aa)) constitute a YrdC-like domain.

It belongs to the SUA5 family. TsaC subfamily.

The protein resides in the cytoplasm. The catalysed reaction is L-threonine + hydrogencarbonate + ATP = L-threonylcarbamoyladenylate + diphosphate + H2O. Required for the formation of a threonylcarbamoyl group on adenosine at position 37 (t(6)A37) in tRNAs that read codons beginning with adenine. Catalyzes the conversion of L-threonine, HCO(3)(-)/CO(2) and ATP to give threonylcarbamoyl-AMP (TC-AMP) as the acyladenylate intermediate, with the release of diphosphate. This is Threonylcarbamoyl-AMP synthase from Mannheimia succiniciproducens (strain KCTC 0769BP / MBEL55E).